Consider the following 315-residue polypeptide: Protoheme IX farnesyltransferase (315 aa).

Transmembrane regions (helical) follow at residues 32–52, 53–73, 93–113, 120–140, 153–173, 180–200, 226–246, 249–269, and 295–315; these read VMSL…GHMN, PVLA…SGAL, IPAG…LSAF, LMVN…YAVI, IVIG…AATG, LVLF…LSLF, ALFY…MGFA, FYGV…WRLW, and IFAV…FGVF.

It belongs to the UbiA prenyltransferase family. Protoheme IX farnesyltransferase subfamily.

It is found in the cell inner membrane. The catalysed reaction is heme b + (2E,6E)-farnesyl diphosphate + H2O = Fe(II)-heme o + diphosphate. It functions in the pathway porphyrin-containing compound metabolism; heme O biosynthesis; heme O from protoheme: step 1/1. Its function is as follows. Converts heme B (protoheme IX) to heme O by substitution of the vinyl group on carbon 2 of heme B porphyrin ring with a hydroxyethyl farnesyl side group. This Brucella canis (strain ATCC 23365 / NCTC 10854 / RM-666) protein is Protoheme IX farnesyltransferase.